A 498-amino-acid chain; its full sequence is Histidine--tRNA ligase (498 aa).

This sequence belongs to the class-II aminoacyl-tRNA synthetase family. In terms of assembly, homodimer.

It localises to the cytoplasm. It carries out the reaction tRNA(His) + L-histidine + ATP = L-histidyl-tRNA(His) + AMP + diphosphate + H(+). The chain is Histidine--tRNA ligase from Mycoplasmopsis synoviae (strain 53) (Mycoplasma synoviae).